Here is a 257-residue protein sequence, read N- to C-terminus: Probable ABC transporter arginine-binding protein ArtJ (257 aa).

Positions 1–23 (MCIKRKKTWIAFLAVVCSFCLTG) are cleaved as a signal peptide. L-arginine contacts are provided by Asn41, Glu48, Gly100, Ser102, Arg107, and Tyr151.

This sequence belongs to the bacterial solute-binding protein 3 family.

The protein resides in the secreted. It localises to the cell surface. In terms of biological role, probably part of an ABC transporter complex involved in arginine transport. Binds arginine. Interacts with host epithelial cells, suggesting a role in host-cell adhesion during infection. The protein is Probable ABC transporter arginine-binding protein ArtJ of Chlamydia trachomatis serovar D (strain ATCC VR-885 / DSM 19411 / UW-3/Cx).